The primary structure comprises 89 residues: Co-chaperonin GroES (89 aa).

Belongs to the GroES chaperonin family. As to quaternary structure, heptamer of 7 subunits arranged in a ring. Interacts with the chaperonin GroEL.

The protein localises to the cytoplasm. In terms of biological role, together with the chaperonin GroEL, plays an essential role in assisting protein folding. The GroEL-GroES system forms a nano-cage that allows encapsulation of the non-native substrate proteins and provides a physical environment optimized to promote and accelerate protein folding. GroES binds to the apical surface of the GroEL ring, thereby capping the opening of the GroEL channel. This chain is Co-chaperonin GroES, found in Petrotoga mobilis (strain DSM 10674 / SJ95).